The sequence spans 326 residues: uncharacterized protein (326 aa).

This sequence belongs to the transferase hexapeptide repeat family.

This is an uncharacterized protein from Escherichia coli (strain K12).